The chain runs to 720 residues: Phenylalanine--tRNA ligase beta subunit, chloroplastic (720 aa).

One can recognise a B5 domain in the interval 319-404 (NSTLNIDISL…RVYGYNQFQS (86 aa)). Residues Asp-382, Asp-388, Glu-391, and Glu-392 each coordinate Mg(2+). Positions 626-719 (SKYPCITRDL…IIKKLNLEIR (94 aa)) constitute an FDX-ACB domain.

The protein belongs to the phenylalanyl-tRNA synthetase beta subunit family. Type 1 subfamily. Tetramer of two alpha and two beta subunits. Mg(2+) is required as a cofactor.

Its subcellular location is the plastid. The protein localises to the chloroplast. It carries out the reaction tRNA(Phe) + L-phenylalanine + ATP = L-phenylalanyl-tRNA(Phe) + AMP + diphosphate + H(+). The chain is Phenylalanine--tRNA ligase beta subunit, chloroplastic (pheT) from Porphyra purpurea (Red seaweed).